Here is a 65-residue protein sequence, read N- to C-terminus: Large ribosomal subunit protein bL35 (65 aa).

The segment at 1 to 22 is disordered; sequence MPKMKTKSSAKKRFKVTGSGKI.

The protein belongs to the bacterial ribosomal protein bL35 family.

The polypeptide is Large ribosomal subunit protein bL35 (Flavobacterium psychrophilum (strain ATCC 49511 / DSM 21280 / CIP 103535 / JIP02/86)).